We begin with the raw amino-acid sequence, 320 residues long: Reticulocalbin-2 (320 aa).

The signal sequence occupies residues 1–25 (MRLGPRPAVLGLLLLLLLYAAVAGA). 2 EF-hand domains span residues 64-99 (EQQR…SFKH) and 100-135 (YAMQ…RVID). Residues Asp77, Asp79, Asp81, Glu88, Asp113, Asn115, Asp117, Thr119, and Glu124 each contribute to the Ca(2+) site. Thr140 carries the post-translational modification Phosphothreonine. EF-hand domains follow at residues 150-185 (FRQL…HPEE), 189-224 (MTEF…DPTA), 230-265 (WILV…NNQG), and 266-301 (IAQE…FLTS). The Ca(2+) site is built by Asp167, Glu176, Asp202, Asn204, Asp206, Glu213, Asp243, Asp245, Asp247, Arg249, Glu254, Asp279, Asn281, Asp283, Lys285, and Glu290. The Prevents secretion from ER signature appears at 317–320 (HDEL).

Belongs to the CREC family. In terms of assembly, binds the snake venom phospholipase complex taipoxin. In terms of tissue distribution, ubiquitous.

The protein resides in the endoplasmic reticulum lumen. Its function is as follows. Not known. Binds calcium. The chain is Reticulocalbin-2 (Rcn2) from Rattus norvegicus (Rat).